The primary structure comprises 605 residues: DNA mismatch repair protein MutL (605 aa).

The protein belongs to the DNA mismatch repair MutL/HexB family.

This protein is involved in the repair of mismatches in DNA. It is required for dam-dependent methyl-directed DNA mismatch repair. May act as a 'molecular matchmaker', a protein that promotes the formation of a stable complex between two or more DNA-binding proteins in an ATP-dependent manner without itself being part of a final effector complex. The polypeptide is DNA mismatch repair protein MutL (Methylocella silvestris (strain DSM 15510 / CIP 108128 / LMG 27833 / NCIMB 13906 / BL2)).